We begin with the raw amino-acid sequence, 332 residues long: Glyoxylate reductase (332 aa).

NADP(+) is bound by residues 155-158 (MGRI) and 236-238 (TSR). Catalysis depends on residues arginine 238 and glutamate 267. The Proton donor role is filled by histidine 286. An NADP(+)-binding site is contributed by 286-288 (HAA).

It belongs to the D-isomer specific 2-hydroxyacid dehydrogenase family. GyaR subfamily. As to quaternary structure, homodimer.

Its subcellular location is the cytoplasm. It catalyses the reaction glycolate + NAD(+) = glyoxylate + NADH + H(+). In Korarchaeum cryptofilum (strain OPF8), this protein is Glyoxylate reductase.